An 844-amino-acid chain; its full sequence is Janus kinase and microtubule-interacting protein 3 (844 aa).

A coiled-coil region spans residues 8–258 (SRAKGDKAEA…QLSQVREADR (251 aa)). Residues 250-290 (LSQVREADRHPGSPRRELPHAAGAGDASDHSGSPEQQLDEK) are disordered. The segment covering 254 to 268 (READRHPGSPRRELP) has biased composition (basic and acidic residues). Positions 269–282 (HAAGAGDASDHSGS) are enriched in low complexity. Residues 289 to 421 (EKDARRFQLK…DELSKTLETA (133 aa)) adopt a coiled-coil conformation. Ser384 carries the post-translational modification Phosphoserine. Residues 466–483 (SDGSSVSYQTDRTDQTPC) are compositionally biased toward polar residues. The disordered stretch occupies residues 466–489 (SDGSSVSYQTDRTDQTPCTPDDDL). Coiled-coil stretches lie at residues 493 to 621 (MAKE…RERK) and 683 to 834 (VLTL…FLFL).

Belongs to the JAKMIP family. Specifically expressed in the CNS and endocrine tissues. Also detected in other tissues including heart, testis and prostate.

It is found in the golgi apparatus. The protein is Janus kinase and microtubule-interacting protein 3 (JAKMIP3) of Homo sapiens (Human).